Here is a 172-residue protein sequence, read N- to C-terminus: 3-phenylpropionate/cinnamic acid dioxygenase subunit beta (172 aa).

It belongs to the bacterial ring-hydroxylating dioxygenase beta subunit family. This dioxygenase system consists of four proteins: the two subunits of the hydroxylase component (HcaE and HcaF), a ferredoxin (HcaC) and a ferredoxin reductase (HcaD).

It carries out the reaction 3-phenylpropanoate + NADH + O2 + H(+) = 3-(cis-5,6-dihydroxycyclohexa-1,3-dien-1-yl)propanoate + NAD(+). The enzyme catalyses (E)-cinnamate + NADH + O2 + H(+) = (2E)-3-(cis-5,6-dihydroxycyclohexa-1,3-dien-1-yl)prop-2-enoate + NAD(+). It participates in aromatic compound metabolism; 3-phenylpropanoate degradation. Functionally, part of the multicomponent 3-phenylpropionate dioxygenase. Converts 3-phenylpropionic acid (PP) and cinnamic acid (CI) into 3-phenylpropionate-dihydrodiol (PP-dihydrodiol) and cinnamic acid-dihydrodiol (CI-dihydrodiol), respectively. The chain is 3-phenylpropionate/cinnamic acid dioxygenase subunit beta from Escherichia coli O139:H28 (strain E24377A / ETEC).